A 264-amino-acid chain; its full sequence is Thymidylate synthase (264 aa).

DUMP-binding positions include Arg21 and 126–127 (RR). The Nucleophile role is filled by Cys146. DUMP is bound by residues 166 to 169 (RSAD), Asn177, and 207 to 209 (HLY). A (6R)-5,10-methylene-5,6,7,8-tetrahydrofolate-binding site is contributed by Asp169. A (6R)-5,10-methylene-5,6,7,8-tetrahydrofolate-binding site is contributed by Ala263.

It belongs to the thymidylate synthase family. Bacterial-type ThyA subfamily. Homodimer.

The protein localises to the cytoplasm. The enzyme catalyses dUMP + (6R)-5,10-methylene-5,6,7,8-tetrahydrofolate = 7,8-dihydrofolate + dTMP. It participates in pyrimidine metabolism; dTTP biosynthesis. Its function is as follows. Catalyzes the reductive methylation of 2'-deoxyuridine-5'-monophosphate (dUMP) to 2'-deoxythymidine-5'-monophosphate (dTMP) while utilizing 5,10-methylenetetrahydrofolate (mTHF) as the methyl donor and reductant in the reaction, yielding dihydrofolate (DHF) as a by-product. This enzymatic reaction provides an intracellular de novo source of dTMP, an essential precursor for DNA biosynthesis. This is Thymidylate synthase from Bradyrhizobium sp. (strain ORS 278).